The primary structure comprises 281 residues: DegV domain-containing protein CA_C0948 (281 aa).

The 277-residue stretch at 4-280 (IAIITDTTAD…PGLVGLVLLE (277 aa)) folds into the DegV domain. Residues Ser-60 and Ser-93 each coordinate hexadecanoate.

Functionally, may bind long-chain fatty acids, such as palmitate, and may play a role in lipid transport or fatty acid metabolism. This is DegV domain-containing protein CA_C0948 from Clostridium acetobutylicum (strain ATCC 824 / DSM 792 / JCM 1419 / IAM 19013 / LMG 5710 / NBRC 13948 / NRRL B-527 / VKM B-1787 / 2291 / W).